The following is a 136-amino-acid chain: Ribonuclease P protein component (136 aa).

The protein belongs to the RnpA family. Consists of a catalytic RNA component (M1 or rnpB) and a protein subunit.

The catalysed reaction is Endonucleolytic cleavage of RNA, removing 5'-extranucleotides from tRNA precursor.. Functionally, RNaseP catalyzes the removal of the 5'-leader sequence from pre-tRNA to produce the mature 5'-terminus. It can also cleave other RNA substrates such as 4.5S RNA. The protein component plays an auxiliary but essential role in vivo by binding to the 5'-leader sequence and broadening the substrate specificity of the ribozyme. The chain is Ribonuclease P protein component from Burkholderia mallei (strain NCTC 10247).